A 141-amino-acid polypeptide reads, in one-letter code: NADH dehydrogenase [ubiquinone] 1 alpha subcomplex subunit 11 (141 aa).

The residue at position 2 (Ala-2) is an N-acetylalanine. Helical transmembrane passes span 21 to 43 and 58 to 80; these read KAYS…RVTL and QYTF…SAHV.

The protein belongs to the complex I NDUFA11 subunit family. Complex I is composed of 45 different subunits.

Its subcellular location is the mitochondrion inner membrane. Functionally, accessory subunit of the mitochondrial membrane respiratory chain NADH dehydrogenase (Complex I), that is believed not to be involved in catalysis. Complex I functions in the transfer of electrons from NADH to the respiratory chain. The immediate electron acceptor for the enzyme is believed to be ubiquinone. The chain is NADH dehydrogenase [ubiquinone] 1 alpha subcomplex subunit 11 (NDUFA11) from Homo sapiens (Human).